The following is a 106-amino-acid chain: Pyrimidine/purine nucleoside phosphorylase (106 aa).

This sequence belongs to the nucleoside phosphorylase PpnP family.

The enzyme catalyses a purine D-ribonucleoside + phosphate = a purine nucleobase + alpha-D-ribose 1-phosphate. It carries out the reaction adenosine + phosphate = alpha-D-ribose 1-phosphate + adenine. It catalyses the reaction cytidine + phosphate = cytosine + alpha-D-ribose 1-phosphate. The catalysed reaction is guanosine + phosphate = alpha-D-ribose 1-phosphate + guanine. The enzyme catalyses inosine + phosphate = alpha-D-ribose 1-phosphate + hypoxanthine. It carries out the reaction thymidine + phosphate = 2-deoxy-alpha-D-ribose 1-phosphate + thymine. It catalyses the reaction uridine + phosphate = alpha-D-ribose 1-phosphate + uracil. The catalysed reaction is xanthosine + phosphate = alpha-D-ribose 1-phosphate + xanthine. In terms of biological role, catalyzes the phosphorolysis of diverse nucleosides, yielding D-ribose 1-phosphate and the respective free bases. Can use uridine, adenosine, guanosine, cytidine, thymidine, inosine and xanthosine as substrates. Also catalyzes the reverse reactions. The polypeptide is Pyrimidine/purine nucleoside phosphorylase (Burkholderia vietnamiensis (strain G4 / LMG 22486) (Burkholderia cepacia (strain R1808))).